Reading from the N-terminus, the 265-residue chain is Hemin import ATP-binding protein HmuV (265 aa).

The ABC transporter domain occupies 10-247; that stretch reads LVARHLRFQT…ETLAHWYRAD (238 aa). ATP is bound at residue 42–49; it reads GPNGAGKS.

It belongs to the ABC transporter superfamily. Heme (hemin) importer (TC 3.A.1.14.5) family. The complex is composed of two ATP-binding proteins (HmuV), two transmembrane proteins (HmuU) and a solute-binding protein (HmuT).

The protein resides in the cell inner membrane. In terms of biological role, part of the ABC transporter complex HmuTUV involved in hemin import. Responsible for energy coupling to the transport system. This chain is Hemin import ATP-binding protein HmuV, found in Pectobacterium atrosepticum (strain SCRI 1043 / ATCC BAA-672) (Erwinia carotovora subsp. atroseptica).